Reading from the N-terminus, the 512-residue chain is ATP synthase subunit alpha (512 aa).

169–176 (GDRQTGKT) provides a ligand contact to ATP.

The protein belongs to the ATPase alpha/beta chains family. In terms of assembly, F-type ATPases have 2 components, CF(1) - the catalytic core - and CF(0) - the membrane proton channel. CF(1) has five subunits: alpha(3), beta(3), gamma(1), delta(1), epsilon(1). CF(0) has three main subunits: a(1), b(2) and c(9-12). The alpha and beta chains form an alternating ring which encloses part of the gamma chain. CF(1) is attached to CF(0) by a central stalk formed by the gamma and epsilon chains, while a peripheral stalk is formed by the delta and b chains.

Its subcellular location is the cell inner membrane. The enzyme catalyses ATP + H2O + 4 H(+)(in) = ADP + phosphate + 5 H(+)(out). Produces ATP from ADP in the presence of a proton gradient across the membrane. The alpha chain is a regulatory subunit. The polypeptide is ATP synthase subunit alpha (Rickettsia bellii (strain OSU 85-389)).